Reading from the N-terminus, the 185-residue chain is Elongation factor P (185 aa).

The protein belongs to the elongation factor P family.

Its subcellular location is the cytoplasm. It functions in the pathway protein biosynthesis; polypeptide chain elongation. Involved in peptide bond synthesis. Stimulates efficient translation and peptide-bond synthesis on native or reconstituted 70S ribosomes in vitro. Probably functions indirectly by altering the affinity of the ribosome for aminoacyl-tRNA, thus increasing their reactivity as acceptors for peptidyl transferase. The chain is Elongation factor P from Alkaliphilus metalliredigens (strain QYMF).